The primary structure comprises 177 residues: Ribosome maturation factor RimM (177 aa).

In terms of domain architecture, PRC barrel spans 98–177 (DDGYYWKDLM…TIEVDWDPGF (80 aa)).

The protein belongs to the RimM family. Binds ribosomal protein uS19.

It is found in the cytoplasm. Functionally, an accessory protein needed during the final step in the assembly of 30S ribosomal subunit, possibly for assembly of the head region. Essential for efficient processing of 16S rRNA. May be needed both before and after RbfA during the maturation of 16S rRNA. It has affinity for free ribosomal 30S subunits but not for 70S ribosomes. This is Ribosome maturation factor RimM from Enterobacter sp. (strain 638).